Reading from the N-terminus, the 190-residue chain is UPF0340 protein BC_5317 (190 aa).

This sequence belongs to the UPF0340 family.

This chain is UPF0340 protein BC_5317, found in Bacillus cereus (strain ATCC 14579 / DSM 31 / CCUG 7414 / JCM 2152 / NBRC 15305 / NCIMB 9373 / NCTC 2599 / NRRL B-3711).